Consider the following 133-residue polypeptide: Small ribosomal subunit protein uS8 (133 aa).

The protein belongs to the universal ribosomal protein uS8 family. Part of the 30S ribosomal subunit. Contacts proteins S5 and S12.

In terms of biological role, one of the primary rRNA binding proteins, it binds directly to 16S rRNA central domain where it helps coordinate assembly of the platform of the 30S subunit. The chain is Small ribosomal subunit protein uS8 from Mycoplasmoides gallisepticum (strain R(low / passage 15 / clone 2)) (Mycoplasma gallisepticum).